Here is a 313-residue protein sequence, read N- to C-terminus: Porphobilinogen deaminase (313 aa).

An S-(dipyrrolylmethanemethyl)cysteine modification is found at Cys242.

The protein belongs to the HMBS family. Monomer. Dipyrromethane serves as cofactor.

The enzyme catalyses 4 porphobilinogen + H2O = hydroxymethylbilane + 4 NH4(+). It functions in the pathway porphyrin-containing compound metabolism; protoporphyrin-IX biosynthesis; coproporphyrinogen-III from 5-aminolevulinate: step 2/4. Its function is as follows. Tetrapolymerization of the monopyrrole PBG into the hydroxymethylbilane pre-uroporphyrinogen in several discrete steps. This Klebsiella pneumoniae (strain 342) protein is Porphobilinogen deaminase.